The chain runs to 142 residues: Large ribosomal subunit protein uL11 (142 aa).

Belongs to the universal ribosomal protein uL11 family. In terms of assembly, part of the ribosomal stalk of the 50S ribosomal subunit. Interacts with L10 and the large rRNA to form the base of the stalk. L10 forms an elongated spine to which L12 dimers bind in a sequential fashion forming a multimeric L10(L12)X complex. Post-translationally, one or more lysine residues are methylated.

Functionally, forms part of the ribosomal stalk which helps the ribosome interact with GTP-bound translation factors. The protein is Large ribosomal subunit protein uL11 of Sinorhizobium fredii (strain NBRC 101917 / NGR234).